A 376-amino-acid chain; its full sequence is Chaperone protein DnaJ (376 aa).

The 66-residue stretch at 5 to 70 (DYYEVLGVGR…DKKAAYDQFG (66 aa)) folds into the J domain. The CR-type zinc-finger motif lies at 132–210 (GLTKELRIPT…CHGEGRVEKS (79 aa)). Zn(2+) contacts are provided by C145, C148, C162, C165, C184, C187, C198, and C201. CXXCXGXG motif repeat units lie at residues 145 to 152 (CDLCDGSG), 162 to 169 (CGTCHGQG), 184 to 191 (CPTCHGRG), and 198 to 205 (CGKCHGEG).

Belongs to the DnaJ family. In terms of assembly, homodimer. Zn(2+) serves as cofactor.

The protein localises to the cytoplasm. Functionally, participates actively in the response to hyperosmotic and heat shock by preventing the aggregation of stress-denatured proteins and by disaggregating proteins, also in an autonomous, DnaK-independent fashion. Unfolded proteins bind initially to DnaJ; upon interaction with the DnaJ-bound protein, DnaK hydrolyzes its bound ATP, resulting in the formation of a stable complex. GrpE releases ADP from DnaK; ATP binding to DnaK triggers the release of the substrate protein, thus completing the reaction cycle. Several rounds of ATP-dependent interactions between DnaJ, DnaK and GrpE are required for fully efficient folding. Also involved, together with DnaK and GrpE, in the DNA replication of plasmids through activation of initiation proteins. The sequence is that of Chaperone protein DnaJ from Shewanella frigidimarina (strain NCIMB 400).